We begin with the raw amino-acid sequence, 333 residues long: Cap-specific mRNA (nucleoside-2'-O-)-methyltransferase (333 aa).

Tyr22 is a binding site for mRNA. S-adenosyl-L-methionine-binding residues include Gln39, Tyr66, Gly68, Gly72, Asp95, Arg97, Val116, and Asp138. Positions Pro169–Val249 are binding to NPH-I. The binding to Rap94 stretch occupies residues Pro169–Lys333. Lys175 serves as the catalytic For methyltransferase activity. Residues Arg177–Phe180, Asp182, Ser205–Glu207, and Glu233 contribute to the mRNA site.

This sequence belongs to the class I-like SAM-binding methyltransferase superfamily. Poxvirus/kinetoplastid 2'-O-MTase family. In terms of assembly, interacts with poly(A) polymerase catalytic subunit OPG063. Interacts with OPG109 and OPG123; these interactions might help linking transcription to capping and polyadenylation.

It is found in the virion. The enzyme catalyses a 5'-end (N(7)-methyl 5'-triphosphoguanosine)-ribonucleoside in mRNA + S-adenosyl-L-methionine = a 5'-end (N(7)-methyl 5'-triphosphoguanosine)-(2'-O-methyl-ribonucleoside) in mRNA + S-adenosyl-L-homocysteine + H(+). Displays methyltransferase, positive regulation of the poly(A) polymerase and transcription elongation activities. Involved in the modification of both mRNA ends and in intermediate and late gene positive transcription elongation. At the mRNAs 5' end, methylates the ribose 2' OH group of the first transcribed nucleotide, thereby producing a 2'-O-methylpurine cap. At the 3' end, functions as a processivity factor which stimulates the activity of the viral poly(A) polymerase OPG063 that creates mRNA's poly(A) tail. In the presence of OPG102, OPG063 does not dissociate from the RNA allowing tail elongation to around 250 adenylates. In Homo sapiens (Human), this protein is Cap-specific mRNA (nucleoside-2'-O-)-methyltransferase (OPG102).